The chain runs to 486 residues: Ribosome biogenesis protein YTM1 (486 aa).

Positions 12–99 are ubiquitin-like (UBL) domain; that stretch reads RQLPINLFTR…ESQIDVEYVR (88 aa). WD repeat units follow at residues 212–251, 305–345, 349–388, 392–432, and 454–486; these read GHTG…PTEH, GHTG…AGAL, PFDK…SLIS, PTTS…TALF, and VLGE…ARGE. The interval 249-299 is disordered; it reads TEHQVPADPVSYLPGQGTKKRRKLEKDQEKAPIEGLTDGDATGEGGWRRAP.

It belongs to the WD repeat WDR12/YTM1 family. Component of the NOP7 complex, composed of ERB1, NOP7 and YTM1. The complex is held together by ERB1, which interacts with NOP7 via its N-terminal domain and with YTM1 via a high-affinity interaction between the seven-bladed beta-propeller domains of the 2 proteins. The NOP7 complex associates with the 66S pre-ribosome. Interacts (via UBL domain) with MDN1 (via VWFA/MIDAS domain).

The protein resides in the nucleus. The protein localises to the nucleolus. Its subcellular location is the nucleoplasm. Its function is as follows. Component of the NOP7 complex, which is required for maturation of the 25S and 5.8S ribosomal RNAs and formation of the 60S ribosome. In Cryptococcus neoformans var. neoformans serotype D (strain B-3501A) (Filobasidiella neoformans), this protein is Ribosome biogenesis protein YTM1.